Consider the following 338-residue polypeptide: Calcium uniporter protein 4, mitochondrial (338 aa).

The transit peptide at 1–36 (MVMMKKLLSNRLFNMSKTASQSLMNCRTSSSSSLAM) directs the protein to the mitochondrion. A helical membrane pass occupies residues 233–253 (LWAGLGYLIIQTAGFMRLTFW). Residues 257–265 (WDVMEPICF) carry the Selectivity filter motif. Position 261 (E261) interacts with Ca(2+). The chain crosses the membrane as a helical span at residues 263–280 (ICFYVSSVYFMAGYTFFL).

It belongs to the MCU (TC 1.A.77) family.

The protein localises to the mitochondrion inner membrane. The catalysed reaction is Ca(2+)(in) = Ca(2+)(out). Functionally, mitochondrial inner membrane calcium uniporter that mediates calcium uptake into mitochondria. Constitutes a pore-forming and calcium-conducting subunit. Mitochondrial calcium homeostasis plays key roles in cellular physiology and regulates cell bioenergetics, cytoplasmic calcium signals and activation of cell death pathways. The protein is Calcium uniporter protein 4, mitochondrial of Arabidopsis thaliana (Mouse-ear cress).